We begin with the raw amino-acid sequence, 109 residues long: Small ribosomal subunit protein bS6 (109 aa).

It belongs to the bacterial ribosomal protein bS6 family.

Functionally, binds together with bS18 to 16S ribosomal RNA. This is Small ribosomal subunit protein bS6 from Ehrlichia chaffeensis (strain ATCC CRL-10679 / Arkansas).